Here is a 178-residue protein sequence, read N- to C-terminus: Small ribosomal subunit protein uS7c (178 aa).

The span at 137 to 146 (QKKEEIEKSK) shows a compositional bias: basic and acidic residues. The tract at residues 137-178 (QKKEEIEKSKSPVNNNKKFISKNKKSKNKKQKKRLKRKKNIY) is disordered. A compositionally biased stretch (basic residues) spans 155–178 (FISKNKKSKNKKQKKRLKRKKNIY).

The protein belongs to the universal ribosomal protein uS7 family. As to quaternary structure, part of the 30S ribosomal subunit.

Its subcellular location is the plastid. Its function is as follows. One of the primary rRNA binding proteins, it binds directly to 16S rRNA where it nucleates assembly of the head domain of the 30S subunit. The protein is Small ribosomal subunit protein uS7c (rps7) of Euglena longa (Euglenophycean alga).